A 222-amino-acid chain; its full sequence is Triosephosphate isomerase (222 aa).

Substrate is bound at residue 9-11 (NLK). The active-site Electrophile is His93. Glu141 functions as the Proton acceptor in the catalytic mechanism. Residues Ile146, Gly181, and 202–203 (AS) contribute to the substrate site.

This sequence belongs to the triosephosphate isomerase family. As to quaternary structure, homotetramer; dimer of dimers.

The protein resides in the cytoplasm. The catalysed reaction is D-glyceraldehyde 3-phosphate = dihydroxyacetone phosphate. It participates in carbohydrate biosynthesis; gluconeogenesis. The protein operates within carbohydrate degradation; glycolysis; D-glyceraldehyde 3-phosphate from glycerone phosphate: step 1/1. Functionally, involved in the gluconeogenesis. Catalyzes stereospecifically the conversion of dihydroxyacetone phosphate (DHAP) to D-glyceraldehyde-3-phosphate (G3P). This is Triosephosphate isomerase from Methanoculleus marisnigri (strain ATCC 35101 / DSM 1498 / JR1).